Consider the following 1530-residue polypeptide: Neurexin-1 (1530 aa).

The first 30 residues, 1–30 (MGTALVQHGGCCLLCLSLLLLGCWAELGSG), serve as a signal peptide directing secretion. The Laminin G-like 1 domain maps to 31–217 (LEFPGAEGQW…PPNSGGGSPC (187 aa)). Topologically, residues 31–1454 (LEFPGAEGQW…EVIRESSSTT (1424 aa)) are extracellular. 2 N-linked (GlcNAc...) asparagine glycosylation sites follow: Asn-125 and Asn-190. A disordered region spans residues 196 to 219 (PVDGSEVKLDEEPPNSGGGSPCEA). Residues 213-255 (GGSPCEAGDEGDGGVCLNGGVCSVVDDQAVCDCSRTGFRGKDC) form the EGF-like 1 domain. 2 disulfide bridges follow: Cys-228-Cys-243 and Cys-245-Cys-255. Laminin G-like domains lie at 299-496 (IATF…AFKC) and 503-695 (DPIT…KPSC). Residues Asp-345, Leu-362, and Met-430 each contribute to the Ca(2+) site. Intrachain disulfides connect Cys-460-Cys-496, Cys-666-Cys-695, Cys-703-Cys-714, Cys-708-Cys-723, and Cys-725-Cys-735. Residues 699–736 (TAKPCLSNPCKNNGMCRDGWNRYVCDCSGTGYLGRSCE) form the EGF-like 2 domain. 2 Laminin G-like domains span residues 741–914 (VLSY…IDYC) and 928–1103 (DPVT…ERGC). Ca(2+) contacts are provided by Asp-788 and Leu-805. N-linked (GlcNAc...) asparagine glycosylation occurs at Asn-813. Residue Arg-864 participates in Ca(2+) binding. 5 disulfides stabilise this stretch: Cys-906–Cys-914, Cys-1075–Cys-1103, Cys-1110–Cys-1121, Cys-1115–Cys-1130, and Cys-1132–Cys-1142. The EGF-like 3 domain occupies 1106–1143 (PSTTCQEDSCSNQGVCLQQWDGFSCDCSMTSFSGPLCN). The region spanning 1149–1347 (YIFSKGGGQI…DANIAIVGNV (199 aa)) is the Laminin G-like 6 domain. Ca(2+) is bound by residues Asp-1199 and Val-1216. Asn-1246 carries an N-linked (GlcNAc...) asparagine glycan. Ile-1298 and Asn-1300 together coordinate Ca(2+). O-linked (Xyl...) (heparan sulfate) serine glycosylation is present at Ser-1408. The disordered stretch occupies residues 1412–1443 (PSDDEDIDPCEPSSGGLANPTRVGGREPYPGS). The helical transmembrane segment at 1455–1475 (GMVVGIVAAAALCILILLYAM) threads the bilayer. The Cytoplasmic portion of the chain corresponds to 1476–1530 (YKYRNRDEGSYHVDESRNYISNSAQSNGAVVKEKQPSSAKSANKNKKNKDKEYYV). Positions 1497–1523 (NSAQSNGAVVKEKQPSSAKSANKNKKN) are interaction with CASK. The tract at residues 1497–1530 (NSAQSNGAVVKEKQPSSAKSANKNKKNKDKEYYV) is disordered.

The protein belongs to the neurexin family. In terms of assembly, interacts (via laminin G-like domain 2 and/or laminin G-like domain 6) with NLGN1 forming a heterotetramer, where one NLGN1 dimer interacts with one NRXN1 dimer. Also interacts (via laminin G-like domain 2 and/or laminin G-like domain 6) with NLGN2, NLGN3 and NLGN4L; interactions with NLGN1, NLGN2, NLGN3 and NLGN4L are calcium-dependent. Interacts (via cytoplasmic C-terminal region) with CASK (via the PDZ, SH3 and guanylate kinase-like domains). Interacts (via cytoplasmic C-terminus) with CASKIN1 and APBA1. Interacts (via laminin G-like domain 2) with NXPH1 and NXPH3. Alpha-type isoforms (neurexin-1-alpha) interact (via laminin G-like domain 2 and/or laminin G-like domain 6) with DAG1 (via alpha-dystroglycan chain). Interacts with LRRTM1, LRRTM2, LRRTM3 and LRRTM4. Interacts with SYT13 and SYTL1. Interacts with CBLN1, CBLN2 and, less avidly, with CBLN4. Interacts with CLSTN3. Alpha-type isoforms interact with alpha-latrotoxin from spider venom. O-glycosylated; contains heparan sulfate. Heparan sulfate attachment is required for synapse development by mediating interactions with neuroligins and LRRTM2. Brain (neuronal synapse).

It is found in the presynaptic cell membrane. Its function is as follows. Cell surface protein involved in cell-cell-interactions, exocytosis of secretory granules and regulation of signal transmission. Function is isoform-specific. Alpha-type isoforms have a long N-terminus with six laminin G-like domains and play an important role in synaptic signal transmission. Alpha-type isoforms play a role in the regulation of calcium channel activity and Ca(2+)-triggered neurotransmitter release at synapses and at neuromuscular junctions. They play an important role in Ca(2+)-triggered exocytosis of secretory granules in pituitary gland. They may affect their functions at synapses and in endocrine cells via their interactions with proteins from the exocytotic machinery. Likewise, alpha-type isoforms play a role in regulating the activity of postsynaptic NMDA receptors, a subtype of glutamate-gated ion channels. Both alpha-type and beta-type isoforms may play a role in the formation or maintenance of synaptic junctions via their interactions (via the extracellular domains) with neuroligin family members, CBLN1 or CBLN2. In vitro, triggers the de novo formation of presynaptic structures. May be involved in specification of excitatory synapses. Alpha-type isoforms were first identified as receptors for alpha-latrotoxin from spider venom. The protein is Neurexin-1 (Nrxn1) of Rattus norvegicus (Rat).